A 473-amino-acid polypeptide reads, in one-letter code: 3-isopropylmalate dehydratase large subunit 2 (473 aa).

Positions 350, 410, and 413 each coordinate [4Fe-4S] cluster.

It belongs to the aconitase/IPM isomerase family. LeuC type 1 subfamily. Heterodimer of LeuC and LeuD. The cofactor is [4Fe-4S] cluster.

The catalysed reaction is (2R,3S)-3-isopropylmalate = (2S)-2-isopropylmalate. It participates in amino-acid biosynthesis; L-leucine biosynthesis; L-leucine from 3-methyl-2-oxobutanoate: step 2/4. Its function is as follows. Catalyzes the isomerization between 2-isopropylmalate and 3-isopropylmalate, via the formation of 2-isopropylmaleate. This chain is 3-isopropylmalate dehydratase large subunit 2, found in Salmonella typhimurium (strain LT2 / SGSC1412 / ATCC 700720).